Reading from the N-terminus, the 35-residue chain is KCSPSGAICSGFGPPEQCCSGACVPHPILRIFVCQ.

Disulfide bonds link Cys2/Cys19, Cys9/Cys23, and Cys18/Cys34.

Trypsin inhibitor. In Spinacia oleracea (Spinach), this protein is Trypsin inhibitor 1.